We begin with the raw amino-acid sequence, 301 residues long: Dihydroorotate dehydrogenase B (NAD(+)), catalytic subunit (301 aa).

Substrate contacts are provided by residues Lys-44, 68–72 (NAMGL), and Asn-122. 44 to 45 (KS) provides a ligand contact to FMN. Asn-122 provides a ligand contact to FMN. The Nucleophile role is filled by Cys-125. Positions 160 and 186 each coordinate FMN. 187–188 (NT) contributes to the substrate binding site. Residues Gly-212, 238–239 (GG), and 260–261 (GS) each bind FMN.

Belongs to the dihydroorotate dehydrogenase family. Type 1 subfamily. In terms of assembly, heterotetramer of 2 PyrK and 2 PyrD type B subunits. It depends on FMN as a cofactor.

The protein resides in the cytoplasm. It catalyses the reaction (S)-dihydroorotate + NAD(+) = orotate + NADH + H(+). It functions in the pathway pyrimidine metabolism; UMP biosynthesis via de novo pathway; orotate from (S)-dihydroorotate (NAD(+) route): step 1/1. Functionally, catalyzes the conversion of dihydroorotate to orotate with NAD(+) as electron acceptor. The sequence is that of Dihydroorotate dehydrogenase B (NAD(+)), catalytic subunit (pyrD) from Methanocella arvoryzae (strain DSM 22066 / NBRC 105507 / MRE50).